Here is a 378-residue protein sequence, read N- to C-terminus: Bifunctional enzyme IspD/IspF (378 aa).

Residues 1-222 form a 2-C-methyl-D-erythritol 4-phosphate cytidylyltransferase region; the sequence is MTETVAIIVA…RLLSPTGAPR (222 aa). Residues 222–378 are 2-C-methyl-D-erythritol 2,4-cyclodiphosphate synthase; that stretch reads RIGKGYDVHE…EAVALLMPKG (157 aa). A divalent metal cation is bound by residues aspartate 228 and histidine 230. Residues 228–230 and 254–255 each bind 4-CDP-2-C-methyl-D-erythritol 2-phosphate; these read DVH and HS. Histidine 262 serves as a coordination point for a divalent metal cation. 4-CDP-2-C-methyl-D-erythritol 2-phosphate-binding positions include 276–278, 352–355, phenylalanine 359, and arginine 362; these read DIG and TTTE.

The protein in the N-terminal section; belongs to the IspD/TarI cytidylyltransferase family. IspD subfamily. It in the C-terminal section; belongs to the IspF family. A divalent metal cation serves as cofactor.

The catalysed reaction is 2-C-methyl-D-erythritol 4-phosphate + CTP + H(+) = 4-CDP-2-C-methyl-D-erythritol + diphosphate. It carries out the reaction 4-CDP-2-C-methyl-D-erythritol 2-phosphate = 2-C-methyl-D-erythritol 2,4-cyclic diphosphate + CMP. It functions in the pathway isoprenoid biosynthesis; isopentenyl diphosphate biosynthesis via DXP pathway; isopentenyl diphosphate from 1-deoxy-D-xylulose 5-phosphate: step 2/6. It participates in isoprenoid biosynthesis; isopentenyl diphosphate biosynthesis via DXP pathway; isopentenyl diphosphate from 1-deoxy-D-xylulose 5-phosphate: step 4/6. In terms of biological role, bifunctional enzyme that catalyzes the formation of 4-diphosphocytidyl-2-C-methyl-D-erythritol from CTP and 2-C-methyl-D-erythritol 4-phosphate (MEP) (IspD), and catalyzes the conversion of 4-diphosphocytidyl-2-C-methyl-D-erythritol 2-phosphate (CDP-ME2P) to 2-C-methyl-D-erythritol 2,4-cyclodiphosphate (ME-CPP) with a corresponding release of cytidine 5-monophosphate (CMP) (IspF). The sequence is that of Bifunctional enzyme IspD/IspF from Hyphomonas neptunium (strain ATCC 15444).